A 208-amino-acid polypeptide reads, in one-letter code: Protein-L-isoaspartate O-methyltransferase (208 aa).

Residue S59 is part of the active site.

Belongs to the methyltransferase superfamily. L-isoaspartyl/D-aspartyl protein methyltransferase family.

Its subcellular location is the cytoplasm. The catalysed reaction is [protein]-L-isoaspartate + S-adenosyl-L-methionine = [protein]-L-isoaspartate alpha-methyl ester + S-adenosyl-L-homocysteine. In terms of biological role, catalyzes the methyl esterification of L-isoaspartyl residues in peptides and proteins that result from spontaneous decomposition of normal L-aspartyl and L-asparaginyl residues. It plays a role in the repair and/or degradation of damaged proteins. The chain is Protein-L-isoaspartate O-methyltransferase from Proteus mirabilis (strain HI4320).